Here is a 106-residue protein sequence, read N- to C-terminus: RNA-binding protein Hfq (106 aa).

The Sm domain maps to 9 to 68 (DPYLNALRKERVPVSIYLVNGIKLQGQIESFDAFVILLRNNISQMVYKHAVSTIVPSRNI). A disordered region spans residues 78-106 (EDEAGEEISAEYTPNAEGQAEATADPLYD).

Belongs to the Hfq family. Homohexamer.

RNA chaperone that binds small regulatory RNA (sRNAs) and mRNAs to facilitate mRNA translational regulation in response to envelope stress, environmental stress and changes in metabolite concentrations. Also binds with high specificity to tRNAs. The protein is RNA-binding protein Hfq of Dichelobacter nodosus (strain VCS1703A).